The chain runs to 623 residues: AM-toxin biosynthesis protein 12-2 (623 aa).

Residues 110-129 (TIPGTSQAKNTEPDHQASGL) are disordered.

It functions in the pathway mycotoxin biosynthesis. In terms of biological role, part of the gene clusters that mediate the biosynthesis of AM-toxins, host-selective toxins (HSTs) causing Alternaria blotch on apple, a worldwide distributed disease. AM-toxins are cyclic depsipeptides containing the 3 residues 2-hydroxy-isovaleric acid (2-HIV), dehydroalanine, L-alanine which are common for all 3 AM-toxins I to III. The fourth precursor is L-alpha-amino-methoxyphenyl-valeric acid (L-Amv) for AM-toxin I, L-alpha-amino-phenyl-valeric acid (L-Apv) for AM-toxin II, and L-alpha-amino-hydroxyphenyl-valeric acid (L-Ahv) for AM-toxin III. AM-toxins have two target sites for affecting susceptible apple cells; they cause invagination of the plasma membrane and electrolyte loss and chloroplast disorganization. The non-ribosomal peptide synthetase AMT1 contains 4 catalytic modules and is responsible for activation of each residue in AM-toxin. The aldo-keto reductase AMT2 catalyzes the conversion of 2-keto-isovaleric acid (2-KIV) to 2-hydroxy-isovaleric acid (2-HIV), one of the precursor residues incorporated by AMT1 during AM-toxin biosynthesis, by reduction of its ketone to an alcohol. The cytochrome P450 monooxygenase AMT3 and the thioesterase AMT4 are also important for AM-toxin production, but their exact function within the AM-toxin biosynthesis are not known yet. Up to 21 proteins (including AMT1 to AMT4) are predicted to be involved in AM-toxin biosynthesis since their expression ishighly up-regulated in AM-toxin-producing cultures. This chain is AM-toxin biosynthesis protein 12-2, found in Alternaria alternata (Alternaria rot fungus).